The following is a 177-amino-acid chain: MKYTILSLVAGALISCSAMAENTLTVKMNDALSSGTGENIGEITVSETPYGLLFTPHLNGLTPGIHGFHVHTNPSCMPGMKDGKEVPALMAGGHLDPEKTGKHLGPYNDKGHLGDLPGLVVNADGTATYPLLAPRLKSLSELKGHSLMIHKGGDNYSDKPAPLGGGGARFACGVIEK.

An N-terminal signal peptide occupies residues 1-20; sequence MKYTILSLVAGALISCSAMA. The Cu cation site is built by His-69, His-71, and His-94. Cys-76 and Cys-172 form a disulfide bridge. 4 residues coordinate Zn(2+): His-94, His-103, His-112, and Asp-115. Residue His-150 coordinates Cu cation.

Belongs to the Cu-Zn superoxide dismutase family. As to quaternary structure, monomer. It depends on Cu cation as a cofactor. The cofactor is Zn(2+).

It localises to the periplasm. The enzyme catalyses 2 superoxide + 2 H(+) = H2O2 + O2. In terms of biological role, destroys radicals which are normally produced within the cells and which are toxic to biological systems. The protein is Superoxide dismutase [Cu-Zn] 1 (sodC1) of Salmonella typhimurium (strain 4/74).